A 149-amino-acid chain; its full sequence is uncharacterized protein (149 aa).

Residues 34-94 (HTPCLPKVPR…NPIGSQRIHS (61 aa)) are disordered. Over residues 56 to 66 (QSPHRQGDRRR) the composition is skewed to basic and acidic residues.

Its subcellular location is the mitochondrion. This is an uncharacterized protein from Arabidopsis thaliana (Mouse-ear cress).